The primary structure comprises 456 residues: 1,3-beta-glucanosyltransferase gas4 (456 aa).

An N-terminal signal peptide occupies residues 1-25; it reads MGVANIIYALFLLGPSIFLKATAQT. An intrachain disulfide couples Cys68 to Cys97. Residues Tyr86, Asn156, Glu157, Asp197, and Arg202 each coordinate (1,3-beta-D-glucosyl)n. The Proton donor role is filled by Glu157. Disulfide bonds link Cys211–Cys350 and Cys229–Cys260. Asn248 carries N-linked (GlcNAc...) asparagine glycosylation. Catalysis depends on Glu257, which acts as the Nucleophile. Tyr296 serves as a coordination point for (1,3-beta-D-glucosyl)n. Disordered regions lie at residues 334–353 and 384–434; these read NPKG…CPAN and IEGP…ESGS. N-linked (GlcNAc...) asparagine glycans are attached at residues Asn353 and Asn415. Residues 417-434 are compositionally biased toward low complexity; it reads TSTTSYTSGMTSSSESGS. A lipid anchor (GPI-anchor amidated serine) is attached at Ser432. The propeptide at 433–456 is removed in mature form; sequence GSSKIGVAFCQALFITVLIATLSF.

Belongs to the glycosyl hydrolase 72 family.

The protein localises to the cell membrane. In terms of biological role, splits internally a 1,3-beta-glucan molecule and transfers the newly generated reducing end (the donor) to the non-reducing end of another 1,3-beta-glucan molecule (the acceptor) forming a 1,3-beta linkage, resulting in the elongation of 1,3-beta-glucan chains in the cell wall. Involved in spore wall assembly. In Schizosaccharomyces pombe (strain 972 / ATCC 24843) (Fission yeast), this protein is 1,3-beta-glucanosyltransferase gas4 (gas4).